We begin with the raw amino-acid sequence, 346 residues long: Methylthioribose-1-phosphate isomerase (346 aa).

Substrate-binding positions include 46–48 (RGA), arginine 89, and glutamine 196. Catalysis depends on aspartate 237, which acts as the Proton donor. Residue 247–248 (NK) participates in substrate binding.

The protein belongs to the eIF-2B alpha/beta/delta subunits family. MtnA subfamily.

The catalysed reaction is 5-(methylsulfanyl)-alpha-D-ribose 1-phosphate = 5-(methylsulfanyl)-D-ribulose 1-phosphate. It participates in amino-acid biosynthesis; L-methionine biosynthesis via salvage pathway; L-methionine from S-methyl-5-thio-alpha-D-ribose 1-phosphate: step 1/6. Functionally, catalyzes the interconversion of methylthioribose-1-phosphate (MTR-1-P) into methylthioribulose-1-phosphate (MTRu-1-P). This chain is Methylthioribose-1-phosphate isomerase, found in Geobacter metallireducens (strain ATCC 53774 / DSM 7210 / GS-15).